We begin with the raw amino-acid sequence, 220 residues long: Uracil-DNA glycosylase (220 aa).

The active-site Proton acceptor is the aspartate 61.

Belongs to the uracil-DNA glycosylase (UDG) superfamily. UNG family.

It is found in the cytoplasm. The catalysed reaction is Hydrolyzes single-stranded DNA or mismatched double-stranded DNA and polynucleotides, releasing free uracil.. Excises uracil residues from the DNA which can arise as a result of misincorporation of dUMP residues by DNA polymerase or due to deamination of cytosine. This chain is Uracil-DNA glycosylase, found in Glaesserella parasuis serovar 5 (strain SH0165) (Haemophilus parasuis).